The primary structure comprises 313 residues: 18S rRNA aminocarboxypropyltransferase (313 aa).

Residues 1–30 (MGKGKNKMHEPKNGRPQRGANGHSSRQNHR) form a disordered region. 4 residues coordinate S-adenosyl-L-methionine: Ser-62, Val-110, Leu-133, and Trp-148. Positions 215–228 (KETQERKSRAKEED) are enriched in basic and acidic residues. A disordered region spans residues 215–313 (KETQERKSRA…SYDPLGNLIR (99 aa)). The span at 237–246 (RRGNGSQSDT) shows a compositional bias: polar residues. Positions 247 to 257 (SESEENSEQSD) are enriched in acidic residues. Residues Ser-286 and Ser-289 each carry the phosphoserine modification.

Belongs to the TDD superfamily. TSR3 family.

The protein resides in the cytoplasm. It localises to the nucleus. It catalyses the reaction an N(1)-methylpseudouridine in rRNA + S-adenosyl-L-methionine = N(1)-methyl-N(3)-[(3S)-3-amino-3-carboxypropyl]pseudouridine in rRNA + S-methyl-5'-thioadenosine + H(+). The enzyme catalyses N(1)-methylpseudouridine(1191) in yeast 18S rRNA + S-adenosyl-L-methionine = N(1)-methyl-N(3)-[(3S)-3-amino-3-carboxypropyl]pseudouridine(1191) in yeast 18S rRNA + S-methyl-5'-thioadenosine + H(+). Aminocarboxypropyltransferase that catalyzes the aminocarboxypropyl transfer on pseudouridine at position 1191 (Psi1191) in 18S rRNA. It constitutes the last step in biosynthesis of the hypermodified N1-methyl-N3-(3-amino-3-carboxypropyl) pseudouridine (m1acp3-Psi) conserved in eukaryotic 18S rRNA. Required for processing 35S pre-rRNA at site D. This is 18S rRNA aminocarboxypropyltransferase from Saccharomyces cerevisiae (strain ATCC 204508 / S288c) (Baker's yeast).